Reading from the N-terminus, the 231-residue chain is Ribonuclease 3 (231 aa).

Residues 12–139 (LKAFLQKNNI…LIAAIYLDQG (128 aa)) form the RNase III domain. Residue glutamate 52 participates in Mg(2+) binding. The active site involves aspartate 56. Aspartate 125 and glutamate 128 together coordinate Mg(2+). Glutamate 128 is an active-site residue. The 67-residue stretch at 165–231 (DPKSELQEYF…AANALSKLKT (67 aa)) folds into the DRBM domain.

It belongs to the ribonuclease III family. As to quaternary structure, homodimer. Mg(2+) serves as cofactor.

It is found in the cytoplasm. The enzyme catalyses Endonucleolytic cleavage to 5'-phosphomonoester.. Digests double-stranded RNA. Involved in the processing of primary rRNA transcript to yield the immediate precursors to the large and small rRNAs (23S and 16S). Processes some mRNAs, and tRNAs when they are encoded in the rRNA operon. Processes pre-crRNA and tracrRNA of type II CRISPR loci if present in the organism. The chain is Ribonuclease 3 from Mycoplasmopsis synoviae (strain 53) (Mycoplasma synoviae).